A 216-amino-acid chain; its full sequence is Adenylate kinase (216 aa).

Glycine 10 to threonine 15 contacts ATP. The interval serine 30–valine 59 is NMP. AMP is bound by residues threonine 31, arginine 36, lysine 57–valine 59, glycine 85–arginine 88, and glutamine 92. Positions glycine 126–aspartate 163 are LID. Residue arginine 127 coordinates ATP. Positions 130 and 133 each coordinate Zn(2+). Valine 136 to tyrosine 137 contributes to the ATP binding site. Residues cysteine 150 and cysteine 153 each coordinate Zn(2+). Residues arginine 160 and arginine 172 each contribute to the AMP site. Alanine 200 provides a ligand contact to ATP.

Belongs to the adenylate kinase family. In terms of assembly, monomer.

It localises to the cytoplasm. It carries out the reaction AMP + ATP = 2 ADP. The protein operates within purine metabolism; AMP biosynthesis via salvage pathway; AMP from ADP: step 1/1. Catalyzes the reversible transfer of the terminal phosphate group between ATP and AMP. Plays an important role in cellular energy homeostasis and in adenine nucleotide metabolism. This is Adenylate kinase from Rhizobium etli (strain CIAT 652).